The chain runs to 462 residues: Glycine--tRNA ligase (462 aa).

Residues arginine 98 and glutamate 174 each coordinate substrate. Residues 206 to 208 (RNE), 216 to 221 (FRTREF), 290 to 291 (EL), and 334 to 337 (GADR) each bind ATP. 221-225 (FEQME) is a substrate binding site. A substrate-binding site is contributed by 330-334 (EPSLG).

Belongs to the class-II aminoacyl-tRNA synthetase family. In terms of assembly, homodimer.

The protein localises to the cytoplasm. The catalysed reaction is tRNA(Gly) + glycine + ATP = glycyl-tRNA(Gly) + AMP + diphosphate. Catalyzes the attachment of glycine to tRNA(Gly). The protein is Glycine--tRNA ligase of Lachnospira eligens (strain ATCC 27750 / DSM 3376 / VPI C15-48 / C15-B4) (Eubacterium eligens).